The sequence spans 279 residues: Thymidylate synthase (279 aa).

133-134 is a dUMP binding site; that stretch reads RR. C154 serves as the catalytic Nucleophile. Residues 178–181, N189, and 219–221 contribute to the dUMP site; these read RSND and HIY. D181 contacts (6R)-5,10-methylene-5,6,7,8-tetrahydrofolate. Position 278 (A278) interacts with (6R)-5,10-methylene-5,6,7,8-tetrahydrofolate.

It belongs to the thymidylate synthase family. Bacterial-type ThyA subfamily. Homodimer.

Its subcellular location is the cytoplasm. The catalysed reaction is dUMP + (6R)-5,10-methylene-5,6,7,8-tetrahydrofolate = 7,8-dihydrofolate + dTMP. The protein operates within pyrimidine metabolism; dTTP biosynthesis. Catalyzes the reductive methylation of 2'-deoxyuridine-5'-monophosphate (dUMP) to 2'-deoxythymidine-5'-monophosphate (dTMP) while utilizing 5,10-methylenetetrahydrofolate (mTHF) as the methyl donor and reductant in the reaction, yielding dihydrofolate (DHF) as a by-product. This enzymatic reaction provides an intracellular de novo source of dTMP, an essential precursor for DNA biosynthesis. This chain is Thymidylate synthase, found in Streptococcus pyogenes serotype M12 (strain MGAS2096).